Reading from the N-terminus, the 228-residue chain is 2,3-bisphosphoglycerate-dependent phosphoglycerate mutase (228 aa).

Substrate is bound by residues 8-15 (RHGQSEWN), 21-22 (TG), arginine 60, 87-90 (ERHY), lysine 98, 114-115 (RR), and 183-184 (GN). Catalysis depends on histidine 9, which acts as the Tele-phosphohistidine intermediate. The Proton donor/acceptor role is filled by glutamate 87.

Belongs to the phosphoglycerate mutase family. BPG-dependent PGAM subfamily.

It catalyses the reaction (2R)-2-phosphoglycerate = (2R)-3-phosphoglycerate. The protein operates within carbohydrate degradation; glycolysis; pyruvate from D-glyceraldehyde 3-phosphate: step 3/5. In terms of biological role, catalyzes the interconversion of 2-phosphoglycerate and 3-phosphoglycerate. In Staphylococcus aureus (strain Mu3 / ATCC 700698), this protein is 2,3-bisphosphoglycerate-dependent phosphoglycerate mutase.